We begin with the raw amino-acid sequence, 412 residues long: Peptidase T (412 aa).

His81 contacts Zn(2+). Asp83 is an active-site residue. Zn(2+) is bound at residue Asp144. Glu178 functions as the Proton acceptor in the catalytic mechanism. Zn(2+) contacts are provided by Glu179, Asp201, and His383.

It belongs to the peptidase M20B family. The cofactor is Zn(2+).

The protein localises to the cytoplasm. The catalysed reaction is Release of the N-terminal residue from a tripeptide.. Its function is as follows. Cleaves the N-terminal amino acid of tripeptides. In Bacillus cereus (strain ATCC 14579 / DSM 31 / CCUG 7414 / JCM 2152 / NBRC 15305 / NCIMB 9373 / NCTC 2599 / NRRL B-3711), this protein is Peptidase T.